Reading from the N-terminus, the 245-residue chain is Dehydrogenase/reductase SDR family member 6 (245 aa).

Residues 16 to 18, aspartate 37, and aspartate 58 contribute to the NAD(+) site; that span reads QGI. Substrate is bound at residue arginine 144. The Proton acceptor role is filled by tyrosine 147. NAD(+)-binding positions include lysine 151 and 180–184; that span reads VDTPS. The substrate site is built by arginine 188 and arginine 205.

It belongs to the short-chain dehydrogenases/reductases (SDR) family. As to quaternary structure, homotetramer. In terms of tissue distribution, detected in liver, spleen and macrophages. Widely expressed.

The protein localises to the cytoplasm. It catalyses the reaction cis-4-hydroxy-L-proline + NAD(+) = 4-oxo-L-proline + NADH + H(+). The enzyme catalyses (R)-3-hydroxybutanoate + NAD(+) = acetoacetate + NADH + H(+). Its pathway is amino-acid metabolism. It functions in the pathway siderophore biosynthesis. Its function is as follows. NAD(H)-dependent dehydrogenase/reductase with a preference for cyclic substrates. Catalyzes stereoselective conversion of 4-oxo-L-proline to cis-4-hydroxy-L-proline, likely a detoxification mechanism for ketoprolines. Mediates the formation of 2,5-dihydroxybenzoate (2,5-DHBA), a siderophore that chelates free cytoplasmic iron and associates with LCN2, thereby regulating iron transport and homeostasis while protecting cells against free radical-induced oxidative stress. The iron-siderophore complex is imported into mitochondria, providing an iron source for mitochondrial metabolic processes in particular heme synthesis. May act as a 3-hydroxybutyrate dehydrogenase. In terms of biological role, (Microbial infection) May play a role in susceptibility to bacterial infection by providing an assimilable source of iron that is exploited by pathogenic bacteria. Host iron-siderophore complexes can be used by bacteria to promote their own growth and pathogenicity. In Mus musculus (Mouse), this protein is Dehydrogenase/reductase SDR family member 6.